We begin with the raw amino-acid sequence, 247 residues long: Exosome complex component Rrp4 (247 aa).

The S1 motif domain occupies 75–148 (DDLVIGIVEN…RDPVITVKGK (74 aa)). In terms of domain architecture, KH spans 154–220 (TEGVVVDVKP…QAIKLIELKA (67 aa)).

Belongs to the RRP4 family. As to quaternary structure, component of the archaeal exosome complex. Forms a trimer of Rrp4 and/or Csl4 subunits. The trimer associates with a hexameric ring-like arrangement composed of 3 Rrp41-Rrp42 heterodimers.

It localises to the cytoplasm. In terms of biological role, non-catalytic component of the exosome, which is a complex involved in RNA degradation. Increases the RNA binding and the efficiency of RNA degradation. Confers strong poly(A) specificity to the exosome. In Thermosphaera aggregans (strain DSM 11486 / M11TL), this protein is Exosome complex component Rrp4.